A 335-amino-acid chain; its full sequence is Holliday junction branch migration complex subunit RuvB (335 aa).

A large ATPase domain (RuvB-L) region spans residues 1–183 (MDERIISSET…FGVIDHLEFY (183 aa)). ATP contacts are provided by residues L22, R23, G64, K67, T68, T69, 130-132 (EDY), R173, Y183, and R220. Position 68 (T68) interacts with Mg(2+). A small ATPAse domain (RuvB-S) region spans residues 184–254 (TEEQLTEIVL…LAKEALTLLQ (71 aa)). Residues 257–335 (PRGLDTIDQK…HLGISYEKEV (79 aa)) form a head domain (RuvB-H) region. 3 residues coordinate DNA: R293, R312, and R317.

Belongs to the RuvB family. Homohexamer. Forms an RuvA(8)-RuvB(12)-Holliday junction (HJ) complex. HJ DNA is sandwiched between 2 RuvA tetramers; dsDNA enters through RuvA and exits via RuvB. An RuvB hexamer assembles on each DNA strand where it exits the tetramer. Each RuvB hexamer is contacted by two RuvA subunits (via domain III) on 2 adjacent RuvB subunits; this complex drives branch migration. In the full resolvosome a probable DNA-RuvA(4)-RuvB(12)-RuvC(2) complex forms which resolves the HJ.

It localises to the cytoplasm. It carries out the reaction ATP + H2O = ADP + phosphate + H(+). Functionally, the RuvA-RuvB-RuvC complex processes Holliday junction (HJ) DNA during genetic recombination and DNA repair, while the RuvA-RuvB complex plays an important role in the rescue of blocked DNA replication forks via replication fork reversal (RFR). RuvA specifically binds to HJ cruciform DNA, conferring on it an open structure. The RuvB hexamer acts as an ATP-dependent pump, pulling dsDNA into and through the RuvAB complex. RuvB forms 2 homohexamers on either side of HJ DNA bound by 1 or 2 RuvA tetramers; 4 subunits per hexamer contact DNA at a time. Coordinated motions by a converter formed by DNA-disengaged RuvB subunits stimulates ATP hydrolysis and nucleotide exchange. Immobilization of the converter enables RuvB to convert the ATP-contained energy into a lever motion, pulling 2 nucleotides of DNA out of the RuvA tetramer per ATP hydrolyzed, thus driving DNA branch migration. The RuvB motors rotate together with the DNA substrate, which together with the progressing nucleotide cycle form the mechanistic basis for DNA recombination by continuous HJ branch migration. Branch migration allows RuvC to scan DNA until it finds its consensus sequence, where it cleaves and resolves cruciform DNA. The chain is Holliday junction branch migration complex subunit RuvB from Listeria monocytogenes serotype 4a (strain HCC23).